An 820-amino-acid chain; its full sequence is Crinkler effector protein 108 (820 aa).

The signal sequence occupies residues 1–17; it reads MVKLYCAVVGVAGSAFS. Positions 18–55 are LQLFLAK domain; the sequence is VRVDESDTVDDLKDAIKAKKPNDFKDIDADKLELYVAK. A DWL domain region spans residues 58-111; sequence GVWLTEADVKSGVADITGLVRLEVVRAKLFSVGLSDEVVSEVDAQEEAAGRGPV. Residues 112–117 carry the HVLVXXP motif motif; the sequence is NVLVVV. The Host nuclear localization signal motif lies at 118–124; that stretch reads PMKKRRV. Positions 125–820 are C-terminal DC effector domain; it reads DAGVDEERRF…MHYDDDEADL (696 aa). N-linked (GlcNAc...) asparagine glycans are attached at residues Asn268, Asn371, and Asn703. The segment at 754–791 is hhH DNA-binding domain; the sequence is NINTASFHELRRLEGVGDATAAKIIAERTIRRFSNLED.

It belongs to the Crinkler effector family.

It localises to the secreted. The protein resides in the host nucleus. Functionally, secreted effector that suppresses plant basal defense and promotes plant susceptibility via targeting promoters of host HSP gene and thus inhibiting their expression. CRN108 binds directly to heat shock elements (HSEs) 5'-GAAnnTTC-3' and interferes with the association of the HSE with the plant heat shock transcription factors, which initializes HSP gene expression in response to stress. The polypeptide is Crinkler effector protein 108 (Phytophthora sojae (Soybean stem and root rot agent)).